The following is a 396-amino-acid chain: Ribosomal RNA large subunit methyltransferase I (396 aa).

A PUA domain is found at 2–81; the sequence is SVRLVLAKGR…ESIDIAFFTR (80 aa).

This sequence belongs to the methyltransferase superfamily. RlmI family.

The protein resides in the cytoplasm. It carries out the reaction cytidine(1962) in 23S rRNA + S-adenosyl-L-methionine = 5-methylcytidine(1962) in 23S rRNA + S-adenosyl-L-homocysteine + H(+). In terms of biological role, specifically methylates the cytosine at position 1962 (m5C1962) of 23S rRNA. In Escherichia coli O1:K1 / APEC, this protein is Ribosomal RNA large subunit methyltransferase I.